A 454-amino-acid chain; its full sequence is GA-binding protein alpha chain (454 aa).

The PNT domain occupies A168–V251. Positions K295–N316 are disordered. Phosphoserine is present on S303. Positions I320–V400 form a DNA-binding region, ETS.

The protein belongs to the ETS family. In terms of assembly, heterotetramer of two alpha and two beta subunits. In terms of tissue distribution, ubiquitous.

Its subcellular location is the nucleus. Its function is as follows. Transcription factor capable of interacting with purine rich repeats (GA repeats). Positively regulates transcription of transcriptional repressor Rhit/Zpf13. This chain is GA-binding protein alpha chain (Gabpa), found in Mus musculus (Mouse).